Here is a 429-residue protein sequence, read N- to C-terminus: Ribosomal RNA small subunit methyltransferase B (429 aa).

Residues 254–260 (CAAPGGK), aspartate 277, aspartate 303, and aspartate 322 contribute to the S-adenosyl-L-methionine site. Cysteine 375 (nucleophile) is an active-site residue.

It belongs to the class I-like SAM-binding methyltransferase superfamily. RsmB/NOP family.

The protein resides in the cytoplasm. The catalysed reaction is cytidine(967) in 16S rRNA + S-adenosyl-L-methionine = 5-methylcytidine(967) in 16S rRNA + S-adenosyl-L-homocysteine + H(+). Functionally, specifically methylates the cytosine at position 967 (m5C967) of 16S rRNA. This Escherichia coli (strain SE11) protein is Ribosomal RNA small subunit methyltransferase B.